Consider the following 465-residue polypeptide: UDP-N-acetylmuramoylalanine--D-glutamate ligase (465 aa).

127 to 133 (GSNGKST) contributes to the ATP binding site.

It belongs to the MurCDEF family.

It is found in the cytoplasm. It carries out the reaction UDP-N-acetyl-alpha-D-muramoyl-L-alanine + D-glutamate + ATP = UDP-N-acetyl-alpha-D-muramoyl-L-alanyl-D-glutamate + ADP + phosphate + H(+). Its pathway is cell wall biogenesis; peptidoglycan biosynthesis. In terms of biological role, cell wall formation. Catalyzes the addition of glutamate to the nucleotide precursor UDP-N-acetylmuramoyl-L-alanine (UMA). This Cereibacter sphaeroides (strain ATCC 17023 / DSM 158 / JCM 6121 / CCUG 31486 / LMG 2827 / NBRC 12203 / NCIMB 8253 / ATH 2.4.1.) (Rhodobacter sphaeroides) protein is UDP-N-acetylmuramoylalanine--D-glutamate ligase.